Consider the following 418-residue polypeptide: UDP-N-acetylglucosamine 1-carboxyvinyltransferase (418 aa).

22 to 23 (KN) provides a ligand contact to phosphoenolpyruvate. Arg92 provides a ligand contact to UDP-N-acetyl-alpha-D-glucosamine. Cys116 acts as the Proton donor in catalysis. A 2-(S-cysteinyl)pyruvic acid O-phosphothioketal modification is found at Cys116. Residues 121 to 125 (RPIDL), Asp305, and Leu327 each bind UDP-N-acetyl-alpha-D-glucosamine.

Belongs to the EPSP synthase family. MurA subfamily.

It localises to the cytoplasm. The catalysed reaction is phosphoenolpyruvate + UDP-N-acetyl-alpha-D-glucosamine = UDP-N-acetyl-3-O-(1-carboxyvinyl)-alpha-D-glucosamine + phosphate. It participates in cell wall biogenesis; peptidoglycan biosynthesis. Functionally, cell wall formation. Adds enolpyruvyl to UDP-N-acetylglucosamine. The chain is UDP-N-acetylglucosamine 1-carboxyvinyltransferase from Campylobacter lari (strain RM2100 / D67 / ATCC BAA-1060).